A 298-amino-acid polypeptide reads, in one-letter code: Probable GTP 3',8-cyclase (298 aa).

The 227-residue stretch at Lys-4–Glu-230 folds into the Radical SAM core domain. Arg-13 is a binding site for GTP. Residues Cys-20 and Cys-24 each coordinate [4Fe-4S] cluster. Position 26 (Tyr-26) interacts with S-adenosyl-L-methionine. Residue Cys-27 coordinates [4Fe-4S] cluster. Lys-61 is a GTP binding site. Gly-65 serves as a coordination point for S-adenosyl-L-methionine. Thr-91 lines the GTP pocket. Ser-115 contributes to the S-adenosyl-L-methionine binding site. Lys-152 lines the GTP pocket. Residues Cys-243 and Cys-246 each contribute to the [4Fe-4S] cluster site. Arg-248–Arg-250 contributes to the GTP binding site. Cys-260 contributes to the [4Fe-4S] cluster binding site.

Belongs to the radical SAM superfamily. MoaA family. Requires [4Fe-4S] cluster as cofactor.

The catalysed reaction is GTP + AH2 + S-adenosyl-L-methionine = (8S)-3',8-cyclo-7,8-dihydroguanosine 5'-triphosphate + 5'-deoxyadenosine + L-methionine + A + H(+). It participates in cofactor biosynthesis; molybdopterin biosynthesis. Its function is as follows. Catalyzes the cyclization of GTP to (8S)-3',8-cyclo-7,8-dihydroguanosine 5'-triphosphate. This Methanocaldococcus jannaschii (strain ATCC 43067 / DSM 2661 / JAL-1 / JCM 10045 / NBRC 100440) (Methanococcus jannaschii) protein is Probable GTP 3',8-cyclase.